We begin with the raw amino-acid sequence, 569 residues long: MGSTLGCHRSIPRDPSDLSHNRKFSAACNFSNILVNQERLNINTATEEELMTLPGVTRAVARSIVEYREYIGGFKKVEDLALVSGVGATKLEQVKFEICVSSKGNSAQHSPSSLRRDLLAEQQPHHLTTTVPLTPRVNINTATLAQLMSVRGLSEKMALSIVDYRREHGPFRSVEDLVRMDGINAAFLDRIRHQVFAERSRPPSTHTNGGLTFTAKPHPSPTSLSLQSEDLDLPPGGPTQIISMRPSVEAFGGMRDGRPVFRLATWNLQGCSVEKANNPGVREVVCMTLLENSIKLLAVQELLDKEALEKFCTELNQPILPNIRKWKGSRGCWRSIVAEKPSNQLQKGPCYSGFLWDTAANVELRDIPGRESSPSNGHAKAVGPSPFLARFKVGSNDLTLVNLQLTALALPGAENSSKNHSDGHRLLNFALTLQETLKGEKDVVILGDFGQGPDSNDYDILRREKFHHLVPAHTFTNISTRNPQGSKSVDNIWISKSLKKVFTGHWAVVREGLTNPWIPDNWSWGGVASEHCPVLAELYMEKDWSKKEVPRNGNGVTLEPSEANIKHER.

The N-myristoyl glycine moiety is linked to residue Gly-2. Phosphoserine is present on residues Ser-16 and Ser-25. Residues 38 to 67 (ERLNINTATEEELMTLPGVTRAVARSIVEY) enclose the HhH domain. Ser-106, Ser-110, Ser-160, and Ser-173 each carry phosphoserine. The interval 200–224 (SRPPSTHTNGGLTFTAKPHPSPTSL) is disordered. The span at 202–211 (PPSTHTNGGL) shows a compositional bias: polar residues. Thr-265 is modified (phosphothreonine). The tract at residues 549 to 569 (VPRNGNGVTLEPSEANIKHER) is disordered.

The sequence is that of Endonuclease/exonuclease/phosphatase family domain-containing protein 1 (Eepd1) from Mus musculus (Mouse).